The sequence spans 320 residues: Protein PXR1 (320 aa).

Positions 1–11 (MGLAGPRKRTK) are enriched in basic residues. The tract at residues 1 to 24 (MGLAGPRKRTKISHDPNNTAWSRS) is disordered. The segment covering 15–24 (DPNNTAWSRS) has biased composition (polar residues). Residues 25 to 79 (TSGYGHKIMSAQGWTPGSFLGASNAAHADHFTAGSAGHIRVILKDDNLGLGAKLR) enclose the G-patch domain. A disordered region spans residues 152 to 298 (GEEVQTPQIS…MGRQFTRGRH (147 aa)). Over residues 169–182 (KRPKKARKKEKRRA) the composition is skewed to basic residues. Composition is skewed to basic and acidic residues over residues 203–214 (RKENKEKKKSSD), 243–256 (KDPE…HDDS), and 269–288 (QESR…EHRP).

It belongs to the PINX1 family.

It is found in the nucleus. The protein localises to the nucleolus. Functionally, involved in rRNA-processing at A0, A1 and A2 sites and negatively regulates telomerase. This is Protein PXR1 (PXR1) from Ajellomyces capsulatus (strain NAm1 / WU24) (Darling's disease fungus).